Consider the following 138-residue polypeptide: Small ribosomal subunit protein uS12 (138 aa).

At Asp-89 the chain carries 3-methylthioaspartic acid. The interval 101–138 (ALDTAGTQNRNQGRSKYGTKRPKKGAATAAKGPVKGKK) is disordered. Positions 105-114 (AGTQNRNQGR) are enriched in polar residues. Residues 125–138 (GAATAAKGPVKGKK) show a composition bias toward low complexity.

The protein belongs to the universal ribosomal protein uS12 family. As to quaternary structure, part of the 30S ribosomal subunit. Contacts proteins S8 and S17. May interact with IF1 in the 30S initiation complex.

Its function is as follows. With S4 and S5 plays an important role in translational accuracy. In terms of biological role, interacts with and stabilizes bases of the 16S rRNA that are involved in tRNA selection in the A site and with the mRNA backbone. Located at the interface of the 30S and 50S subunits, it traverses the body of the 30S subunit contacting proteins on the other side and probably holding the rRNA structure together. The combined cluster of proteins S8, S12 and S17 appears to hold together the shoulder and platform of the 30S subunit. The chain is Small ribosomal subunit protein uS12 from Heliobacterium modesticaldum (strain ATCC 51547 / Ice1).